The following is a 540-amino-acid chain: Chaperonin GroEL (540 aa).

Residues 30–33 (TLGP), Lys-51, 87–91 (DGTTT), Gly-415, and Asp-495 contribute to the ATP site.

This sequence belongs to the chaperonin (HSP60) family. Forms a cylinder of 14 subunits composed of two heptameric rings stacked back-to-back. Interacts with the co-chaperonin GroES.

It is found in the cytoplasm. It carries out the reaction ATP + H2O + a folded polypeptide = ADP + phosphate + an unfolded polypeptide.. In terms of biological role, together with its co-chaperonin GroES, plays an essential role in assisting protein folding. The GroEL-GroES system forms a nano-cage that allows encapsulation of the non-native substrate proteins and provides a physical environment optimized to promote and accelerate protein folding. The polypeptide is Chaperonin GroEL (Serratia marcescens).